The sequence spans 335 residues: Epidermal differentiation-specific protein (335 aa).

4 Beta/gamma crystallin 'Greek key' domains span residues 2-42 (NTIT…KIVG), 43-81 (QPWI…RLIT), 87-126 (PQIT…RVQR), and 127-169 (GAWA…YPLR).

This sequence belongs to the beta/gamma-crystallin family. As to expression, epidermis specific.

This is Epidermal differentiation-specific protein from Cynops pyrrhogaster (Japanese fire-bellied newt).